Consider the following 386-residue polypeptide: 2,3-diketo-5-methylthiopentyl-1-phosphate enolase (386 aa).

The active-site Proton acceptor is Lys-85. Substrate is bound by residues Lys-131, 157–160 (KDDE), His-248, Gly-316, and 338–339 (GT). Residues Lys-157, Asp-159, and Glu-160 each contribute to the Mg(2+) site. Lys-157 is modified (N6-carboxylysine).

It belongs to the RuBisCO large chain family. Type IV subfamily. As to quaternary structure, homodimer. The cofactor is Mg(2+).

It carries out the reaction 5-methylsulfanyl-2,3-dioxopentyl phosphate = 2-hydroxy-5-methylsulfanyl-3-oxopent-1-enyl phosphate. The protein operates within amino-acid biosynthesis; L-methionine biosynthesis via salvage pathway; L-methionine from S-methyl-5-thio-alpha-D-ribose 1-phosphate: step 3/6. Functionally, catalyzes the enolization of 2,3-diketo-5-methylthiopentyl-1-phosphate (DK-MTP-1-P) into 2-hydroxy-3-keto-5-methylthiopentenyl-1-phosphate (HK-MTPenyl-1-P). The polypeptide is 2,3-diketo-5-methylthiopentyl-1-phosphate enolase (Microcystis aeruginosa (strain NIES-843 / IAM M-2473)).